Reading from the N-terminus, the 158-residue chain is NAD(P)H-quinone oxidoreductase subunit N (158 aa).

This sequence belongs to the complex I NdhN subunit family. As to quaternary structure, NDH-1 can be composed of about 15 different subunits; different subcomplexes with different compositions have been identified which probably have different functions.

Its subcellular location is the cellular thylakoid membrane. The enzyme catalyses a plastoquinone + NADH + (n+1) H(+)(in) = a plastoquinol + NAD(+) + n H(+)(out). It carries out the reaction a plastoquinone + NADPH + (n+1) H(+)(in) = a plastoquinol + NADP(+) + n H(+)(out). In terms of biological role, NDH-1 shuttles electrons from an unknown electron donor, via FMN and iron-sulfur (Fe-S) centers, to quinones in the respiratory and/or the photosynthetic chain. The immediate electron acceptor for the enzyme in this species is believed to be plastoquinone. Couples the redox reaction to proton translocation, and thus conserves the redox energy in a proton gradient. Cyanobacterial NDH-1 also plays a role in inorganic carbon-concentration. The protein is NAD(P)H-quinone oxidoreductase subunit N of Microcystis aeruginosa (strain NIES-843 / IAM M-2473).